A 600-amino-acid polypeptide reads, in one-letter code: Na(+)/dicarboxylate cotransporter 3 (600 aa).

Residues 1–16 (MAALAALAKKVWSARR) are Cytoplasmic-facing. Residues 17 to 37 (LLVLLLVPLALLPILFALPPK) form a helical membrane-spanning segment. The Extracellular portion of the chain corresponds to 38-55 (EGRCLYVILLMAVYWCTE). A helical membrane pass occupies residues 56–76 (ALPLSVTALLPIILFPFMGIL). Residues 77-82 (PSSKVC) are Cytoplasmic-facing. A helical membrane pass occupies residues 83-103 (PQYFLDTNFLFLSGLIMASAI). The Extracellular segment spans residues 104–137 (EERNLHRRIALKVLMLVGVQPARLILGMMVTTSF). Residues 138 to 158 (LSMWLSNTASTAMMLPIASAI) traverse the membrane as a helical segment. At 159–229 (LKSLFGQRDT…KEEEHRRNIW (71 aa)) the chain is on the cytoplasmic side. The helical transmembrane segment at 230 to 250 (KGFLISIPYSASIGGTATLTG) threads the bilayer. Residues 251-278 (TAPNLILLGQLKSFFPQCDVVNFGSWFI) lie on the Extracellular side of the membrane. Residues 279–299 (FAFPLMLLFLLVGWLWISFLY) form a helical membrane-spanning segment. The Cytoplasmic segment spans residues 300–336 (GGMSWRGWRKKNSKLQDVAEDKAKAVIQEEFQNLGPI). The chain crosses the membrane as a helical span at residues 337 to 357 (KFAEQAVFILFCLFAILLFSR). Residues 358-372 (DPKFIPGWASLFAPG) lie on the Extracellular side of the membrane. Residues 373–393 (FVSDAVTGVAIVTILFFFPSQ) form a helical membrane-spanning segment. Residues 394 to 422 (KPSLKWWFDFKAPNSETEPLLSWKKAQET) are Cytoplasmic-facing. Positions 423–443 (VPWNIILLLGGGFAMAKGCEE) form an intramembrane region, helical. Topologically, residues 444–461 (SGLSAWIGGQLHPLEHVP) are cytoplasmic. A helical membrane pass occupies residues 462-482 (PLLAVLLITVVIAFFTEFASN). The Extracellular segment spans residues 483-505 (TATIIIFLPVLAELAIRLHVHPL). A helical membrane pass occupies residues 506-526 (YLMIPGTVSCSYAFMLPVSTP). Topologically, residues 527–546 (PNSIAFSTGHLLVKDMVRTG) are cytoplasmic. The helical transmembrane segment at 547-567 (LLMNLMGVLLLSLAMNTWAQA) threads the bilayer. The Extracellular segment spans residues 568 to 600 (IFQLGTFPDWANTHAANVTALPPALTNNTVQTL). Asparagine 584 and asparagine 594 each carry an N-linked (GlcNAc...) asparagine glycan.

Belongs to the SLC13A/DASS transporter (TC 2.A.47) family. NADC subfamily. In terms of tissue distribution, highly expressed in proximal parts of straight tubules in the kidney. Detected in placenta, in brain, and in liver. Strongly expressed within the meningeal layers of supporting tissue that surround the brain and relatively weakly expressed throughout the cerebral cortex, hippocampus, and cerebellum.

The protein resides in the cell membrane. The enzyme catalyses succinate(out) + 3 Na(+)(out) = succinate(in) + 3 Na(+)(in). The catalysed reaction is 2-oxoglutarate(out) + 3 Na(+)(out) = 2-oxoglutarate(in) + 3 Na(+)(in). It catalyses the reaction N-acetyl-L-aspartate(out) + 3 Na(+)(out) = N-acetyl-L-aspartate(in) + 3 Na(+)(in). It carries out the reaction glutarate(out) + 3 Na(+)(out) = glutarate(in) + 3 Na(+)(in). The enzyme catalyses fumarate(out) + 3 Na(+)(out) = fumarate(in) + 3 Na(+)(in). The catalysed reaction is malate(out) + 3 Na(+)(out) = malate(in) + 3 Na(+)(in). It catalyses the reaction 2,2-dimethylsuccinate(out) + 3 Na(+)(out) = 2,2-dimethylsuccinate(in) + 3 Na(+)(in). It carries out the reaction 2,3-dimethylsuccinate(out) + 3 Na(+)(out) = 2,3-dimethylsuccinate(in) + 3 Na(+)(in). The enzyme catalyses itaconate(out) + 3 Na(+)(out) = itaconate(in) + 3 Na(+)(in). With respect to regulation, li(+) decreases succinate transport in the presence of Na(+). Its function is as follows. High-affinity sodium-dicarboxylate cotransporter that accepts a range of substrates with 4-6 carbon atoms, such as the citric acid cycle intermediates succinate and alpha-ketoglutarate (2-oxoglutarate), as well as other compounds including N-acetyl-L-aspartate. Transports the dicarboxylate into the cell with a probable stoichiometry of 3 Na(+) for 1 divalent dicarboxylate, rendering the process electrogenic. Can transport citrate in a Na(+)-dependent manner, recognizing the divalent form of citrate rather than the trivalent form which is normally found in blood. Imports itaconate in hepatocytes leading to activation of TFEB-dependent lysosomal biogenesis involved in antibacterial innate immune response. In Rattus norvegicus (Rat), this protein is Na(+)/dicarboxylate cotransporter 3 (Slc13a3).